The primary structure comprises 537 residues: Zinc metalloproteinase nas-23 (537 aa).

A signal peptide spans 1-16; it reads MRFLILVLAGSIGIYG. The propeptide occupies 17–111; the sequence is VNLPKIPKLS…EQLDHSRTKR (95 aa). Asn-77 carries an N-linked (GlcNAc...) asparagine glycan. Residues 116–311 enclose the Peptidase M12A domain; the sequence is NAMYPKTIWL…AKINRHYNCE (196 aa). Disulfide bonds link Cys-156-Cys-310, Cys-178-Cys-199, Cys-314-Cys-334, Cys-336-Cys-345, Cys-356-Cys-385, and Cys-412-Cys-433. His-207 is a Zn(2+) binding site. The active site involves Glu-208. The Zn(2+) site is built by His-211 and His-217. Positions 306 to 346 constitute an EGF-like domain; sequence RHYNCEKNCKNKITCLNGGYQHPKNCKICVCPPGYGGSDCK. Residues 356 to 471 enclose the CUB domain; that stretch reads CTGVLVAGET…VQLRYSTVDG (116 aa). Residue Asn-481 is glycosylated (N-linked (GlcNAc...) asparagine).

The cofactor is Zn(2+). Expressed in the hypodermis, rectum and to a lesser extent in pharyngeal muscles and intestine.

Its subcellular location is the secreted. In terms of biological role, metalloprotease. This Caenorhabditis elegans protein is Zinc metalloproteinase nas-23 (nas-23).